Reading from the N-terminus, the 1212-residue chain is uncharacterized protein (1212 aa).

A disordered region spans residues 783-802; that stretch reads TRQDASGGSSSGTKKGEKLQ.

This is an uncharacterized protein from Human herpesvirus 6B (strain Z29) (HHV-6 variant B).